A 556-amino-acid chain; its full sequence is Probable glucomannan 4-beta-mannosyltransferase 3 (556 aa).

Residues 56 to 76 (IFVFIPILKCLVTICLVMSLL) form a helical membrane-spanning segment. The active site involves Asp-159. Substrate is bound by residues Asp-218 and Asp-220. Residue Asp-312 is part of the active site. A run of 4 helical transmembrane segments spans residues 391 to 411 (IVVHIFTFVFYCLILPTTVLF), 428 to 448 (ITILNAIATPRSLHLLVFWIL), 509 to 529 (LVVGLYIFFCGCYDFAYGGSY), and 530 to 550 (FYVYLFLQSCAFFVAGVGYIG).

Belongs to the glycosyltransferase 2 family. Plant cellulose synthase-like A subfamily.

It is found in the golgi apparatus membrane. The enzyme catalyses GDP-mannose + (glucomannan)n = GDP + (glucomannan)n+1.. In terms of biological role, probable mannan synthase which consists of a 4-beta-mannosyltransferase activity on mannan using GDP-mannose. The beta-1,4-mannan product is the backbone for galactomannan synthesis by galactomannan galactosyltransferase. Galactomannan is a noncellulosic polysaccharides of plant cell wall. The sequence is that of Probable glucomannan 4-beta-mannosyltransferase 3 from Arabidopsis thaliana (Mouse-ear cress).